The chain runs to 199 residues: Alpha-D-glucose 1-phosphate phosphatase YihX (199 aa).

Asp6 serves as the catalytic Nucleophile. Asp6 lines the Mg(2+) pocket. Substrate is bound by residues 6 to 8 (DLG), 107 to 108 (SN), Lys141, and Asp166. Asp166 contacts Mg(2+).

It belongs to the HAD-like hydrolase superfamily. YihX family. Mg(2+) serves as cofactor. It depends on Mn(2+) as a cofactor. Requires Co(2+) as cofactor. The cofactor is Zn(2+).

The enzyme catalyses alpha-D-glucose 1-phosphate + H2O = D-glucose + phosphate. Its function is as follows. Catalyzes the dephosphorylation of alpha-D-glucose 1-phosphate (Glc1P) and, to a lesser extent, of other sugar phosphates. Has no activity with the beta form of Glc1P. In addition, YihX has significant phosphatase activity against pyridoxal phosphate (PLP) and low beta-phosphoglucomutase activity. The sequence is that of Alpha-D-glucose 1-phosphate phosphatase YihX (yihX) from Escherichia coli (strain K12).